The primary structure comprises 420 residues: Gamma-glutamyl phosphate reductase (420 aa).

It belongs to the gamma-glutamyl phosphate reductase family.

Its subcellular location is the cytoplasm. It catalyses the reaction L-glutamate 5-semialdehyde + phosphate + NADP(+) = L-glutamyl 5-phosphate + NADPH + H(+). The protein operates within amino-acid biosynthesis; L-proline biosynthesis; L-glutamate 5-semialdehyde from L-glutamate: step 2/2. Its function is as follows. Catalyzes the NADPH-dependent reduction of L-glutamate 5-phosphate into L-glutamate 5-semialdehyde and phosphate. The product spontaneously undergoes cyclization to form 1-pyrroline-5-carboxylate. The protein is Gamma-glutamyl phosphate reductase of Streptococcus gordonii (strain Challis / ATCC 35105 / BCRC 15272 / CH1 / DL1 / V288).